The sequence spans 543 residues: CTP synthase (543 aa).

Residues 1–265 are amidoligase domain; the sequence is MARYIFITGG…DDEVLAAFGI (265 aa). S13 contributes to the CTP binding site. S13 contributes to the UTP binding site. 14 to 19 is a binding site for ATP; the sequence is SLGKGL. Residue Y54 participates in L-glutamine binding. Position 71 (D71) interacts with ATP. D71 and E139 together coordinate Mg(2+). Residues 146–148, 186–191, and K222 each bind CTP; these read DIE and KTKPTQ. UTP is bound by residues 186-191 and K222; that span reads KTKPTQ. 238–240 serves as a coordination point for ATP; sequence RDA. The Glutamine amidotransferase type-1 domain maps to 291 to 542; that stretch reads TIAIVGKYTG…IQAAVVQSRL (252 aa). Position 353 (G353) interacts with L-glutamine. C380 serves as the catalytic Nucleophile; for glutamine hydrolysis. Residues 381–384, E404, and R470 contribute to the L-glutamine site; that span reads FGMQ. Active-site residues include H515 and E517.

It belongs to the CTP synthase family. In terms of assembly, homotetramer.

It carries out the reaction UTP + L-glutamine + ATP + H2O = CTP + L-glutamate + ADP + phosphate + 2 H(+). The catalysed reaction is L-glutamine + H2O = L-glutamate + NH4(+). It catalyses the reaction UTP + NH4(+) + ATP = CTP + ADP + phosphate + 2 H(+). Its pathway is pyrimidine metabolism; CTP biosynthesis via de novo pathway; CTP from UDP: step 2/2. Allosterically activated by GTP, when glutamine is the substrate; GTP has no effect on the reaction when ammonia is the substrate. The allosteric effector GTP functions by stabilizing the protein conformation that binds the tetrahedral intermediate(s) formed during glutamine hydrolysis. Inhibited by the product CTP, via allosteric rather than competitive inhibition. Catalyzes the ATP-dependent amination of UTP to CTP with either L-glutamine or ammonia as the source of nitrogen. Regulates intracellular CTP levels through interactions with the four ribonucleotide triphosphates. The protein is CTP synthase of Nitrobacter winogradskyi (strain ATCC 25391 / DSM 10237 / CIP 104748 / NCIMB 11846 / Nb-255).